The sequence spans 562 residues: Gut esterase 1 (562 aa).

The N-terminal stretch at 1–16 is a signal peptide; sequence MRVLLASLLIFGACWA. Cysteines 75 and 93 form a disulfide. The active-site Acyl-ester intermediate is Ser-199. Cys-251 and Cys-259 are oxidised to a cystine. Residues Glu-320 and His-451 each act as charge relay system in the active site. The Prevents secretion from ER motif lies at 559-562; it reads KDEL.

The protein belongs to the type-B carboxylesterase/lipase family. In terms of tissue distribution, expressed only in the intestine.

The protein localises to the endoplasmic reticulum lumen. It catalyses the reaction a carboxylic ester + H2O = an alcohol + a carboxylate + H(+). In Caenorhabditis briggsae, this protein is Gut esterase 1 (ges-1).